An 843-amino-acid chain; its full sequence is MKVISLFILVGFIGEFQSFSSASSPVNCQWDFYAPWSECNGCTKTQTRRRSVAVYGQYGGQPCVGNAFETQSCEPTRGCPTEEGCGERFRCFSGQCISKSLVCNGDSDCDEDSADEDRCEDSERRPSCDIDKPPPNIELTGNGYNELTGQFRNRVINTKSFGGQCRKVFSGDGKDFYRLSGNVLSYTFQVKINNDFNYEFYNSTWSYVKHTSTEHTSSSRKRSFFRSSSSSSRSYTSHTNEIHKGKSYQLLVVENTVEVAQFINNNPEFLQLAEPFWKELSHLPSLYDYSAYRRLIDQYGTHYLQSGSLGGEYRVLFYVDSEKLKQNDFNSVEEKKCKSSGWHFVVKFSSHGCKELENALKAASGTQNNVLRGEPFIRGGGAGFISGLSYLELDNPAGNKRRYSAWAESVTNLPQVIKQKLTPLYELVKEVPCASVKKLYLKWALEEYLDEFDPCHCRPCQNGGLATVEGTHCLCHCKPYTFGAACEQGVLVGNQAGGVDGGWSCWSSWSPCVQGKKTRSRECNNPPPSGGGRSCVGETTESTQCEDEELEHLRLLEPHCFPLSLVPTEFCPSPPALKDGFVQDEGTMFPVGKNVVYTCNEGYSLIGNPVARCGEDLRWLVGEMHCQKIACVLPVLMDGIQSHPQKPFYTVGEKVTVSCSGGMSLEGPSAFLCGSSLKWSPEMKNARCVQKENPLTQAVPKCQRWEKLQNSRCVCKMPYECGPSLDVCAQDERSKRILPLTVCKMHVLHCQGRNYTLTGRDSCTLPASAEKACGACPLWGKCDAESSKCVCREASECEEEGFSICVEVNGKEQTMSECEAGALRCRGQSISVTSIRPCAAETQ.

The signal sequence occupies residues 1-22 (MKVISLFILVGFIGEFQSFSSA). The TSP type-1 1 domain maps to 27–80 (NCQWDFYAPWSECNGCTKTQTRRRSVAVYGQYGGQPCVGNAFETQSCEPTRGCP). 7 disulfides stabilise this stretch: Cys-28–Cys-63, Cys-39–Cys-73, Cys-42–Cys-79, Cys-85–Cys-96, Cys-91–Cys-109, Cys-103–Cys-119, and Cys-128–Cys-165. Trp-36 is a glycosylation site (C-linked (Man) tryptophan). The LDL-receptor class A domain maps to 83-121 (EGCGERFRCFSGQCISKSLVCNGDSDCDEDSADEDRCED). The span at 108 to 120 (DCDEDSADEDRCE) shows a compositional bias: acidic residues. Residues 108–143 (DCDEDSADEDRCEDSERRPSCDIDKPPPNIELTGNG) are disordered. The segment covering 121–132 (DSERRPSCDIDK) has biased composition (basic and acidic residues). An MACPF domain is found at 124 to 456 (RRPSCDIDKP…EYLDEFDPCH (333 aa)). The N-linked (GlcNAc...) asparagine glycan is linked to Asn-202. A disordered region spans residues 219–240 (SRKRSFFRSSSSSSRSYTSHTN). Over residues 225-234 (FRSSSSSSRS) the composition is skewed to low complexity. Cystine bridges form between Cys-337-Cys-353, Cys-433-Cys-560, Cys-455-Cys-505, Cys-457-Cys-473, Cys-460-Cys-475, Cys-477-Cys-486, Cys-512-Cys-545, Cys-523-Cys-535, Cys-571-Cys-613, Cys-599-Cys-626, Cys-631-Cys-673, and Cys-659-Cys-688. The region spanning 457–487 (CRPCQNGGLATVEGTHCLCHCKPYTFGAACE) is the EGF-like domain. A TSP type-1 2 domain is found at 500–549 (DGGWSCWSSWSPCVQGKKTRSRECNNPPPSGGGRSCVGETTESTQCEDEE). Trp-503, Trp-506, and Trp-509 each carry a C-linked (Man) tryptophan; partial glycan. The interval 516–538 (KKTRSRECNNPPPSGGGRSCVGE) is disordered. CCP stretches follow at residues 545 to 615 (CEDE…RCGE) and 616 to 693 (DLRW…QKEN). Sushi domains are found at residues 569–628 (EFCP…HCQK) and 629–690 (IACV…RCVQ). Factor I module (FIM) stretches follow at residues 695–770 (LTQA…ASAE) and 771–843 (KACG…AETQ). Thr-696 carries O-linked (GalNAc...) threonine glycosylation. Cystine bridges form between Cys-702–Cys-713, Cys-715–Cys-750, Cys-721–Cys-743, Cys-728–Cys-763, Cys-773–Cys-782, Cys-776–Cys-789, Cys-791–Cys-825, Cys-797–Cys-818, and Cys-805–Cys-838. Asn-754 carries N-linked (GlcNAc...) (complex) asparagine glycosylation.

This sequence belongs to the complement C6/C7/C8/C9 family. In terms of assembly, monomer or dimer; as a C5b-7 complex it can also form multimeric rosettes. Component of the membrane attack complex (MAC), composed of complement C5b, C6, C7, C8A, C8B, C8G and multiple copies of the pore-forming subunit C9. C-, N- and O-glycosylated. O-glycosylated with core 1 or possibly core 8 glycans.

The protein localises to the secreted. The protein resides in the target cell membrane. Its activity is regulated as follows. Membrane attack complex (MAC) assembly is inhibited by CD59, thereby protecting self-cells from damage during complement activation. MAC assembly is also inhibited by clusterin (CLU) chaperones that inhibit polymerization of C9. Functionally, component of the membrane attack complex (MAC), a multiprotein complex activated by the complement cascade, which inserts into a target cell membrane and forms a pore, leading to target cell membrane rupture and cell lysis. The MAC is initiated by proteolytic cleavage of C5 into complement C5b in response to the classical, alternative, lectin and GZMK complement pathways. The complement pathways consist in a cascade of proteins that leads to phagocytosis and breakdown of pathogens and signaling that strengthens the adaptive immune system. C7 serves as a membrane anchor. During MAC assembly, associates with C5b and C6 to form the C5b-7 complex, a key lipophilic precursor of the MAC complex, which associates with the outer leaflet and reduces the energy for membrane bending. The chain is Complement component C7 from Homo sapiens (Human).